Here is a 147-residue protein sequence, read N- to C-terminus: Pathogenesis-related protein PR-4B (147 aa).

A signal peptide spans M1–A25. One can recognise a Barwin domain in the interval Q26–D147. 3 cysteine pairs are disulfide-bonded: C54–C86, C75–C109, and C89–C145.

It localises to the secreted. The protein localises to the cell wall. The polypeptide is Pathogenesis-related protein PR-4B (Nicotiana tabacum (Common tobacco)).